The chain runs to 371 residues: N-acetyldiaminopimelate deacetylase (371 aa).

Aspartate 68 is a catalytic residue. Glutamate 127 (proton acceptor) is an active-site residue.

This sequence belongs to the peptidase M20A family. N-acetyldiaminopimelate deacetylase subfamily.

The catalysed reaction is N-acetyl-(2S,6S)-2,6-diaminopimelate + H2O = (2S,6S)-2,6-diaminopimelate + acetate. Its pathway is amino-acid biosynthesis; L-lysine biosynthesis via DAP pathway; LL-2,6-diaminopimelate from (S)-tetrahydrodipicolinate (acetylase route): step 3/3. Catalyzes the conversion of N-acetyl-diaminopimelate to diaminopimelate and acetate. This is N-acetyldiaminopimelate deacetylase from Oceanobacillus iheyensis (strain DSM 14371 / CIP 107618 / JCM 11309 / KCTC 3954 / HTE831).